A 109-amino-acid polypeptide reads, in one-letter code: Tetracenomycin F2 cyclase (109 aa).

Homodimer.

The catalysed reaction is tetracenomycin F2 + H(+) = tetracenomycin F1 + H2O. The protein operates within antibiotic biosynthesis; tetracenomycin C biosynthesis. Functionally, catalyzing the conversion of tetracenomycin F2 to tetracenomycin F1. The protein is Tetracenomycin F2 cyclase (tcmI) of Streptomyces glaucescens.